The chain runs to 212 residues: Outer-membrane lipoprotein carrier protein (212 aa).

The signal sequence occupies residues 1-25; it reads MRKRILVSACAALAVFAAHMPTALA.

The protein belongs to the LolA family. In terms of assembly, monomer.

The protein localises to the periplasm. In terms of biological role, participates in the translocation of lipoproteins from the inner membrane to the outer membrane. Only forms a complex with a lipoprotein if the residue after the N-terminal Cys is not an aspartate (The Asp acts as a targeting signal to indicate that the lipoprotein should stay in the inner membrane). This Cupriavidus pinatubonensis (strain JMP 134 / LMG 1197) (Cupriavidus necator (strain JMP 134)) protein is Outer-membrane lipoprotein carrier protein.